The primary structure comprises 396 residues: Ornithine aminotransferase (396 aa).

K255 carries the N6-(pyridoxal phosphate)lysine modification.

The protein belongs to the class-III pyridoxal-phosphate-dependent aminotransferase family. OAT subfamily. Pyridoxal 5'-phosphate is required as a cofactor.

The protein localises to the cytoplasm. The catalysed reaction is a 2-oxocarboxylate + L-ornithine = L-glutamate 5-semialdehyde + an L-alpha-amino acid. The protein operates within amino-acid biosynthesis; L-proline biosynthesis; L-glutamate 5-semialdehyde from L-ornithine: step 1/1. In terms of biological role, catalyzes the interconversion of ornithine to glutamate semialdehyde. The protein is Ornithine aminotransferase of Staphylococcus carnosus (strain TM300).